The following is a 568-amino-acid chain: Urease subunit alpha (568 aa).

One can recognise a Urease domain in the interval Gly130–Phe568. His135, His137, and Lys218 together coordinate Ni(2+). Lys218 carries the post-translational modification N6-carboxylysine. Residue His220 participates in substrate binding. Ni(2+)-binding residues include His247 and His273. The active-site Proton donor is the His321. Ni(2+) is bound at residue Asp361.

This sequence belongs to the metallo-dependent hydrolases superfamily. Urease alpha subunit family. As to quaternary structure, heterotrimer of UreA (gamma), UreB (beta) and UreC (alpha) subunits. Three heterotrimers associate to form the active enzyme. It depends on Ni cation as a cofactor. Post-translationally, carboxylation allows a single lysine to coordinate two nickel ions.

The protein resides in the cytoplasm. The catalysed reaction is urea + 2 H2O + H(+) = hydrogencarbonate + 2 NH4(+). It functions in the pathway nitrogen metabolism; urea degradation; CO(2) and NH(3) from urea (urease route): step 1/1. The sequence is that of Urease subunit alpha from Nitrosospira multiformis (strain ATCC 25196 / NCIMB 11849 / C 71).